The primary structure comprises 218 residues: Protein U63 (218 aa).

This sequence belongs to the herpesviridae UL92 family.

The polypeptide is Protein U63 (U63) (Homo sapiens (Human)).